Here is a 417-residue protein sequence, read N- to C-terminus: MLKREMNIADYDAELWQAMEQEKVRQEEHIELIASENYTSPRVMQAQGSQLTNKYAEGYPGKRYYGGCEYVDVVEQLAIDRAKELFGADYANVQPHSGSQANFAVYTALLQPGDTVLGMNLAQGGHLTHGSPVNFSGKLYNIVPYGIDESGKIDYDEMAKLAKEHKPKMIIGGFSAYSGVVDWAKMREIADSIGAYLFVDMAHVAGLIAAGVYPNPVPHAHVVTTTTHKTLAGPRGGLILAKGGDEELYKKLNSAVFPSAQGGPLMHVIAGKAVALKEAMEPEFKVYQQQVAKNAKAMVEVFLNRGYKVVSGGTENHLFLLDLVDKNLTGKEADAALGRANITVNKNSVPNDPKSPFVTSGIRIGSPAVTRRGFKEAEVKELAGWMCDVLDNINDEATIERVKVKVLDICARFPVYA.

(6S)-5,6,7,8-tetrahydrofolate-binding positions include leucine 121 and 125–127 (GHL). Residue lysine 229 is modified to N6-(pyridoxal phosphate)lysine. 355 to 357 (SPF) provides a ligand contact to (6S)-5,6,7,8-tetrahydrofolate.

The protein belongs to the SHMT family. In terms of assembly, homodimer. Pyridoxal 5'-phosphate serves as cofactor.

It localises to the cytoplasm. The enzyme catalyses (6R)-5,10-methylene-5,6,7,8-tetrahydrofolate + glycine + H2O = (6S)-5,6,7,8-tetrahydrofolate + L-serine. Its pathway is one-carbon metabolism; tetrahydrofolate interconversion. The protein operates within amino-acid biosynthesis; glycine biosynthesis; glycine from L-serine: step 1/1. Its function is as follows. Catalyzes the reversible interconversion of serine and glycine with tetrahydrofolate (THF) serving as the one-carbon carrier. This reaction serves as the major source of one-carbon groups required for the biosynthesis of purines, thymidylate, methionine, and other important biomolecules. Also exhibits THF-independent aldolase activity toward beta-hydroxyamino acids, producing glycine and aldehydes, via a retro-aldol mechanism. This Salmonella paratyphi C (strain RKS4594) protein is Serine hydroxymethyltransferase.